A 1050-amino-acid chain; its full sequence is Sentrin-specific protease 7 (1050 aa).

3 disordered regions span residues 1–28 (MDKRKLGRRPSSSEIITEGKRKKSSSDL), 183–288 (PPVT…DVKY), and 304–365 (RRLR…KSDF). 4 positions are modified to phosphoserine: serine 11, serine 12, serine 13, and serine 25. Low complexity predominate over residues 196–211 (LQSEQLSSSSDGSLES). The span at 259–271 (ISDTQPEDLNSGS) shows a compositional bias: polar residues. Positions 273–288 (GCDHLEQESRNKDVKY) are enriched in basic and acidic residues. The span at 310 to 320 (LPDSQYCTSLD) shows a compositional bias: polar residues. Composition is skewed to basic and acidic residues over residues 321–331 (KSTEQTKKQED) and 338–365 (EFEKPSENYHQDPKLPEEITTKPTKSDF). Phosphoserine occurs at positions 373, 433, 443, and 444. The tract at residues 443-476 (SSDEEGPVEHKSSEILKLQSKQDRETTNENESTS) is disordered. The span at 449-469 (PVEHKSSEILKLQSKQDRETT) shows a compositional bias: basic and acidic residues. Positions 760–1050 (LGVTNEDLEC…HLQQQKGSSS (291 aa)) are protease. Active-site residues include histidine 860 and aspartate 939. The active-site Nucleophile is cysteine 992.

The protein belongs to the peptidase C48 family.

The protein resides in the cytoplasm. Protease that acts as a positive regulator of the cGAS-STING pathway by catalyzing desumoylation of CGAS. Desumoylation of CGAS promotes DNA-binding activity of CGAS, subsequent oligomerization and activation. Deconjugates SUMO2 and SUMO3 from targeted proteins, but not SUMO1. Catalyzes the deconjugation of poly-SUMO2 and poly-SUMO3 chains. Has very low efficiency in processing full-length SUMO proteins to their mature forms. The chain is Sentrin-specific protease 7 from Homo sapiens (Human).